Here is a 757-residue protein sequence, read N- to C-terminus: Mitofusin-2 (757 aa).

At 1-604 (MSLLFSRCNS…TQEEFMVSMV (604 aa)) the chain is on the cytoplasmic side. The tract at residues 30–94 (KHFVTAKKKI…VRGISEVLAR (65 aa)) is part of a helix bundle domain, formed by helices from N-terminal and C-terminal regions. One can recognise a Dynamin-type G domain in the interval 93–342 (ARRHMKVAFF…VRMFEFQNFE (250 aa)). A G1 motif region spans residues 103 to 110 (GRTSNGKS). Position 106 to 111 (106 to 111 (SNGKST)) interacts with GTP. T111 is subject to Phosphothreonine; by PINK1. Positions 129–130 (TT) are G2 motif. The segment at 199-202 (DSPG) is G3 motif. 258–261 (NRWD) is a GTP binding site. Residues 258 to 261 (NRWD) are G4 motif. Residue E288 is a region of interest, G5 motif. GTP-binding residues include S305 and K307. A part of a helix bundle domain, formed by helices from N-terminal and C-terminal regions region spans residues 359–385 (EQHTVRAKQIAEAVRLIMDSLHMAARE). Residues 391–434 (EEMREERQDRLKFIDKQLELLAQDYKLRIKQITEEVERQVSTAM) are a coiled coil. S442 bears the Phosphoserine; by PINK1 mark. The chain crosses the membrane as a helical span at residues 605 to 625 (TGLASLTSRTSMGILVVGGVV). W626 is a topological domain (mitochondrial intermembrane). Residues 627–647 (KAVGWRLIALSFGLYGLLYVY) traverse the membrane as a helical segment. The Cytoplasmic portion of the chain corresponds to 648–757 (ERLTWTTKAK…FTHQYLQPSR (110 aa)). Residues 695-738 (TFAHLCQQVDVTRENLEQEIAAMNKKIEVLDSLQSKAKLLRNKA) adopt a coiled-coil conformation. Residues 722–753 (EVLDSLQSKAKLLRNKAGWLDSELNMFTHQYL) form a part of a helix bundle domain, formed by helices from N-terminal and C-terminal regions region.

It belongs to the TRAFAC class dynamin-like GTPase superfamily. Dynamin/Fzo/YdjA family. Mitofusin subfamily. As to quaternary structure, forms homomultimers and heteromultimers with MFN1. Oligomerization is essential for mitochondrion fusion. Interacts with VAT1. Interacts with STOML2; may form heterooligomers. Interacts (phosphorylated) with PRKN. Interacts with EIF2AK3. Interacts with THG1L; THG1L probably functions as a guanyl-nucleotide exchange factor/GEF, activating MFN2. Phosphorylated by PINK1. Post-translationally, ubiquitinated by non-degradative ubiquitin by PRKN, promoting mitochondrial fusion; deubiquitination by USP30 inhibits mitochondrial fusion. Ubiquitinated by HUWE1 when dietary stearate (C18:0) levels are low; ubiquitination inhibits mitochondrial fusion. As to expression, ubiquitous; expressed at low level. Highly expressed in heart and kidney.

Its subcellular location is the mitochondrion outer membrane. It catalyses the reaction GTP + H2O = GDP + phosphate + H(+). In terms of biological role, mitochondrial outer membrane GTPase that mediates mitochondrial clustering and fusion. Mitochondria are highly dynamic organelles, and their morphology is determined by the equilibrium between mitochondrial fusion and fission events. Overexpression induces the formation of mitochondrial networks. Membrane clustering requires GTPase activity and may involve a major rearrangement of the coiled coil domains. Plays a central role in mitochondrial metabolism and may be associated with obesity and/or apoptosis processes. Plays an important role in the regulation of vascular smooth muscle cell proliferation. Involved in the clearance of damaged mitochondria via selective autophagy (mitophagy). Is required for PRKN recruitment to dysfunctional mitochondria. Involved in the control of unfolded protein response (UPR) upon ER stress including activation of apoptosis and autophagy during ER stress. Acts as an upstream regulator of EIF2AK3 and suppresses EIF2AK3 activation under basal conditions. This is Mitofusin-2 from Homo sapiens (Human).